We begin with the raw amino-acid sequence, 503 residues long: Discoidin, CUB and LCCL domain-containing protein 1 (503 aa).

The N-terminal stretch at 1-25 is a signal peptide; sequence MGTGAGGPSVLALLFAVCAPLRLQA. The Extracellular portion of the chain corresponds to 26 to 250; the sequence is EELGDGCGHI…FTTPGMNITT (225 aa). 4 disulfide bridges follow: Cys-32/Cys-59, Cys-85/Cys-103, Cys-149/Cys-165, and Cys-169/Cys-191. Residues 32–141 enclose the CUB domain; the sequence is CGHIVTSQDS…RGFLLTYASS (110 aa). The N-linked (GlcNAc...) asparagine glycan is linked to Asn-55. One can recognise an LCCL domain in the interval 143–239; it reads HPDLITCLER…RHGSLSEKRF (97 aa). The N-linked (GlcNAc...) asparagine glycan is linked to Asn-247. A helical transmembrane segment spans residues 251–271; the sequence is VAIPSVIFIALLLTGMGIFAI. Residues 272–503 are Cytoplasmic-facing; it reads CRKRKKKGNP…LNQTAMTALL (232 aa). Ser-305 is subject to Phosphoserine. At Thr-406 the chain carries Phosphothreonine. Positions 410–503 are disordered; sequence QSGYRVPGPR…LNQTAMTALL (94 aa). A compositionally biased stretch (polar residues) spans 494 to 503; that stretch reads LNQTAMTALL.

Its subcellular location is the membrane. The protein is Discoidin, CUB and LCCL domain-containing protein 1 (Dcbld1) of Mus musculus (Mouse).